Here is a 742-residue protein sequence, read N- to C-terminus: Phosphoribosylformylglycinamidine synthase subunit PurL (742 aa).

The active site involves H53. Positions 56 and 95 each coordinate ATP. Residue E97 coordinates Mg(2+). Substrate is bound by residues 98–101 (SHNH) and R120. H99 acts as the Proton acceptor in catalysis. D121 contacts Mg(2+). Q245 serves as a coordination point for substrate. A Mg(2+)-binding site is contributed by D275. 319 to 321 (ESQ) serves as a coordination point for substrate. ATP is bound by residues D502 and G539. Mg(2+) is bound at residue N540. Residue S542 participates in substrate binding.

The protein belongs to the FGAMS family. Monomer. Part of the FGAM synthase complex composed of 1 PurL, 1 PurQ and 2 PurS subunits.

Its subcellular location is the cytoplasm. It carries out the reaction N(2)-formyl-N(1)-(5-phospho-beta-D-ribosyl)glycinamide + L-glutamine + ATP + H2O = 2-formamido-N(1)-(5-O-phospho-beta-D-ribosyl)acetamidine + L-glutamate + ADP + phosphate + H(+). It participates in purine metabolism; IMP biosynthesis via de novo pathway; 5-amino-1-(5-phospho-D-ribosyl)imidazole from N(2)-formyl-N(1)-(5-phospho-D-ribosyl)glycinamide: step 1/2. Functionally, part of the phosphoribosylformylglycinamidine synthase complex involved in the purines biosynthetic pathway. Catalyzes the ATP-dependent conversion of formylglycinamide ribonucleotide (FGAR) and glutamine to yield formylglycinamidine ribonucleotide (FGAM) and glutamate. The FGAM synthase complex is composed of three subunits. PurQ produces an ammonia molecule by converting glutamine to glutamate. PurL transfers the ammonia molecule to FGAR to form FGAM in an ATP-dependent manner. PurS interacts with PurQ and PurL and is thought to assist in the transfer of the ammonia molecule from PurQ to PurL. This chain is Phosphoribosylformylglycinamidine synthase subunit PurL, found in Lactobacillus acidophilus (strain ATCC 700396 / NCK56 / N2 / NCFM).